Reading from the N-terminus, the 157-residue chain is Large ribosomal subunit protein eL29 (157 aa).

A compositionally biased stretch (basic residues) spans 1–26 (MAKSKNHTTHNQSRKWHRNGIKKPRS). Residues 1 to 32 (MAKSKNHTTHNQSRKWHRNGIKKPRSQRYESL) form a disordered region. Lys5 carries the N6-methyllysine modification. Ser31 is modified (phosphoserine). Lys33 carries the N6-acetyllysine modification. The segment at 121 to 157 (PKAKAKAKDQTKAQAAAPASIPAQAPKGAQATTKATE) is disordered. The segment covering 132–147 (KAQAAAPASIPAQAPK) has biased composition (low complexity). The residue at position 140 (Ser140) is a Phosphoserine.

The protein belongs to the eukaryotic ribosomal protein eL29 family. As to quaternary structure, component of the large ribosomal subunit.

The protein localises to the cytoplasm. Component of the large ribosomal subunit. The ribosome is a large ribonucleoprotein complex responsible for the synthesis of proteins in the cell. This Macaca fascicularis (Crab-eating macaque) protein is Large ribosomal subunit protein eL29 (RPL29).